Consider the following 481-residue polypeptide: Aspartyl/glutamyl-tRNA(Asn/Gln) amidotransferase subunit B (481 aa).

Belongs to the GatB/GatE family. GatB subfamily. Heterotrimer of A, B and C subunits.

The catalysed reaction is L-glutamyl-tRNA(Gln) + L-glutamine + ATP + H2O = L-glutaminyl-tRNA(Gln) + L-glutamate + ADP + phosphate + H(+). It catalyses the reaction L-aspartyl-tRNA(Asn) + L-glutamine + ATP + H2O = L-asparaginyl-tRNA(Asn) + L-glutamate + ADP + phosphate + 2 H(+). Its function is as follows. Allows the formation of correctly charged Asn-tRNA(Asn) or Gln-tRNA(Gln) through the transamidation of misacylated Asp-tRNA(Asn) or Glu-tRNA(Gln) in organisms which lack either or both of asparaginyl-tRNA or glutaminyl-tRNA synthetases. The reaction takes place in the presence of glutamine and ATP through an activated phospho-Asp-tRNA(Asn) or phospho-Glu-tRNA(Gln). In Pseudomonas savastanoi pv. phaseolicola (strain 1448A / Race 6) (Pseudomonas syringae pv. phaseolicola (strain 1448A / Race 6)), this protein is Aspartyl/glutamyl-tRNA(Asn/Gln) amidotransferase subunit B.